The chain runs to 113 residues: Protein FAM27E3 (113 aa).

Positions 1-113 (MGIFQLLRDR…YTHRHTHRVL (113 aa)) are disordered. Residues 77–99 (QTDRERERNTQRLRDRERRENGR) show a composition bias toward basic and acidic residues. A compositionally biased stretch (basic residues) spans 100 to 113 (HTHTYTHRHTHRVL).

Belongs to the FAM27 family.

The polypeptide is Protein FAM27E3 (FAM27E3) (Homo sapiens (Human)).